The chain runs to 451 residues: MRLLSKQSIERITKILLDELENVRENEQIRNIINSWKPLPSPEKSSIYAVDGSRSVSRLSGTVIYFLSALAVGSGKQLRLSYANAIKSNYGTSDQIVRMQMETLENMLGYLAYRKLEGEKRAILMDGTLTGSLVRPPVYPEDIRSLNVMRALIGESDFENLLNEFLEKLRDHYRKVEEHLEKNGNYDSPILTDNVVEKLRKKYIDTKVIAYGSGKVKVKIPRKALGYSPRVIPIEVLESSRGKSVDELLQELDEEKVELYLGKDDIYDALHMTLSYIEYLYSIDKLLEVKNLAYIAKSFYTKTLARTLGVEIVDTALLDAVIRTLIGHEKEGYLEIEHAVVPPKWSFPDFLLSKFRNIEKLIDKGIHLAYVRFEQGDVIYMLQSTTNIEKILPLILHHKAGGYLRPLQLAHHGVKISYKEARHTLEALINALRNRDPALKIFVKYGRSPLE.

Asp-51 and Asp-126 together coordinate Mn(2+).

It belongs to the NurA family. Homodimer. Interacts with HerA. The cofactor is Mn(2+).

Exonuclease activity is stimulated in the presence of HerA. Its function is as follows. Involved in DNA double-strand break (DSB) repair. Probably acts with HerA to stimulate resection of the 5' strand and produce the long 3' single-strand that is required for RadA loading. Exhibits 5' endonuclease activity and both 5' and 3' exonuclease activities. The sequence is that of DNA double-strand break repair nuclease NurA from Pyrococcus furiosus (strain ATCC 43587 / DSM 3638 / JCM 8422 / Vc1).